Consider the following 494-residue polypeptide: MFYPTLDEVKIMAKDYNIIPVTMEVYADMETPISLFKRFEESSCCFLLESVEGGEKWARYSIIGKNPFLVVESYKNKTIIRERNGSQREVEGNPVEIIKGIMGKFKGANLPNLPRFNGGAVGYFGYDLIRHYENLPNVPEDDMGLPECHFMFTDEVLVYDHLKQKIHIIVNLHVNGNIERAYISAVDRIKTIHREILDTRWKTADNSVLSYNKKKNELAVTSNISKEDFCRNVLKAKQYIRDGDIFQVVLSQRLCVETNENPFNIYRALRVINPSPYMYYLKFGGYRIIGSSPEMLVRVENGIVETCPIAGTRKRGRTKEEDEALEKELLSDEKEIAEHVMLVDLGRNDIGRVSKFGTVAVKNLMHIERYSHVMHVVTNVQGEIREDKTPFDALMSILPAGTLSGAPKVRAMEIIDELETVKRGPYGGAIGYLSFNGNLDSCITIRTIILKDGKAYVQAGAGIVADSVPEREYEECYNKAMALLKAIEEAGEIR.

Residues Ser50 and 276–278 (PYM) contribute to the L-tryptophan site. 311 to 312 (GT) provides a ligand contact to chorismate. Glu338 is a Mg(2+) binding site. Chorismate is bound by residues Tyr426, Arg446, 460–462 (GAG), and Gly462. Residue Glu475 coordinates Mg(2+).

Belongs to the anthranilate synthase component I family. Heterotetramer consisting of two non-identical subunits: a beta subunit (TrpG) and a large alpha subunit (TrpE). It depends on Mg(2+) as a cofactor.

The enzyme catalyses chorismate + L-glutamine = anthranilate + pyruvate + L-glutamate + H(+). It functions in the pathway amino-acid biosynthesis; L-tryptophan biosynthesis; L-tryptophan from chorismate: step 1/5. Feedback inhibited by tryptophan. Its function is as follows. Part of a heterotetrameric complex that catalyzes the two-step biosynthesis of anthranilate, an intermediate in the biosynthesis of L-tryptophan. In the first step, the glutamine-binding beta subunit (TrpG) of anthranilate synthase (AS) provides the glutamine amidotransferase activity which generates ammonia as a substrate that, along with chorismate, is used in the second step, catalyzed by the large alpha subunit of AS (TrpE) to produce anthranilate. In the absence of TrpG, TrpE can synthesize anthranilate directly from chorismate and high concentrations of ammonia. The polypeptide is Anthranilate synthase component 1 (trpE) (Acetivibrio thermocellus (Hungateiclostridium thermocellum)).